Here is a 169-residue protein sequence, read N- to C-terminus: Endoribonuclease YbeY (169 aa).

Positions 72–95 (GPVAAPRQEPDSPPACRKDSSHAE) are disordered. His-131, His-135, and His-141 together coordinate Zn(2+).

The protein belongs to the endoribonuclease YbeY family. Requires Zn(2+) as cofactor.

It is found in the cytoplasm. In terms of biological role, single strand-specific metallo-endoribonuclease involved in late-stage 70S ribosome quality control and in maturation of the 3' terminus of the 16S rRNA. This is Endoribonuclease YbeY from Oleidesulfovibrio alaskensis (strain ATCC BAA-1058 / DSM 17464 / G20) (Desulfovibrio alaskensis).